Reading from the N-terminus, the 220-residue chain is MAARAPELARSLLAALLAPALVALLVSPASGRGGRDHGDWDVDRRLPPLPPREDGPRVARFVTHVSDWGSLATISTIKEVRGWPFADIISISDGPPGEGTGEPYMYLSPLQQAVSDLQENPEATLTMSLAQTVYCRNHGFDPQSPLCVHIMMSGTVTKVNKTEEDYARDSLFVRHPEMKHWPSSHNWFFAKLKISRIWVLDYFGGPKVVTPEEYFNVTLQ.

The N-terminal stretch at Met-1–Gly-31 is a signal peptide. The disordered stretch occupies residues Ser-30 to Glu-53. Over residues Gly-33–Glu-53 the composition is skewed to basic and acidic residues. Asn-160 and Asn-216 each carry an N-linked (GlcNAc...) asparagine glycan.

The protein belongs to the CREG family. In terms of assembly, homodimer. Interacts with IGF2R; the interaction is dependent on glycosylation. N-glycosylated. In terms of tissue distribution, widely expressed.

The protein resides in the secreted. In terms of biological role, may contribute to the transcriptional control of cell growth and differentiation. Antagonizes transcriptional activation and cellular transformation by the adenovirus E1A protein. The transcriptional control activity of cell growth requires interaction with IGF2R. The chain is Protein CREG1 (Creg1) from Mus musculus (Mouse).